Reading from the N-terminus, the 180-residue chain is Dual-action ribosomal maturation protein DarP (180 aa).

This sequence belongs to the DarP family.

It is found in the cytoplasm. Its function is as follows. Member of a network of 50S ribosomal subunit biogenesis factors which assembles along the 30S-50S interface, preventing incorrect 23S rRNA structures from forming. Promotes peptidyl transferase center (PTC) maturation. This is Dual-action ribosomal maturation protein DarP from Chromobacterium violaceum (strain ATCC 12472 / DSM 30191 / JCM 1249 / CCUG 213 / NBRC 12614 / NCIMB 9131 / NCTC 9757 / MK).